Here is a 156-residue protein sequence, read N- to C-terminus: uncharacterized protein (156 aa).

This is an uncharacterized protein from Saccharolobus islandicus (Sulfolobus islandicus).